The chain runs to 94 residues: Small ribosomal subunit protein bS18 (94 aa).

It belongs to the bacterial ribosomal protein bS18 family. In terms of assembly, part of the 30S ribosomal subunit. Forms a tight heterodimer with protein bS6.

Its function is as follows. Binds as a heterodimer with protein bS6 to the central domain of the 16S rRNA, where it helps stabilize the platform of the 30S subunit. The protein is Small ribosomal subunit protein bS18 of Acetivibrio thermocellus (strain ATCC 27405 / DSM 1237 / JCM 9322 / NBRC 103400 / NCIMB 10682 / NRRL B-4536 / VPI 7372) (Clostridium thermocellum).